Consider the following 460-residue polypeptide: MPKEYTSVSKISGPLVLVENIENVKYGEVVEVKLANGEIRQGQVLEAQEGAALVQMFASTQDLSLKGMRIKFLGHVLEINLSPEILGRTFDGLGRPRDGGPEIIPQKRMDINGSPINPYSRAYPQEFIQTGISAIDGMNTIVRGQKIPIFSGAGLPHATLAAQIARQARLLNEEEKFAVVFGAMGITFEEANFFIENFRSTGALERTVLFINLANDPVIERIATPRFALTAAEYLAFDLDMHVLVILSDMTNYAEALREVSASRKEVPGRRGYPGYLYTDLATLYERAGRIKGKKGSITLLPILTMPEDDRTHPIPDLTGYITEGQIFLSRELHRRGIYPPIDVLQSLSRLMRGGIGEGRTRKDHGDLSNQLYAAYSRGLEAKELAVVLGEAALTEEDVQFLEFAEAFEMEFIKQGEYENRSIFETLNLGWKLLRRLPRASLKRIRPEYLDEFWGKEDAS.

The protein belongs to the ATPase alpha/beta chains family.

Produces ATP from ADP in the presence of a proton gradient across the membrane. The V-type beta chain is a regulatory subunit. The chain is V-type ATP synthase beta chain from Dictyoglomus turgidum (strain DSM 6724 / Z-1310).